Here is a 73-residue protein sequence, read N- to C-terminus: NAD(P)H-quinone oxidoreductase subunit L (73 aa).

Helical transmembrane passes span 6–26 (SLIG…LPLL) and 44–64 (VLMF…APFM).

This sequence belongs to the complex I NdhL subunit family. NDH-1 can be composed of about 15 different subunits; different subcomplexes with different compositions have been identified which probably have different functions.

The protein localises to the cellular thylakoid membrane. The enzyme catalyses a plastoquinone + NADH + (n+1) H(+)(in) = a plastoquinol + NAD(+) + n H(+)(out). The catalysed reaction is a plastoquinone + NADPH + (n+1) H(+)(in) = a plastoquinol + NADP(+) + n H(+)(out). Functionally, NDH-1 shuttles electrons from an unknown electron donor, via FMN and iron-sulfur (Fe-S) centers, to quinones in the respiratory and/or the photosynthetic chain. The immediate electron acceptor for the enzyme in this species is believed to be plastoquinone. Couples the redox reaction to proton translocation, and thus conserves the redox energy in a proton gradient. Cyanobacterial NDH-1 also plays a role in inorganic carbon-concentration. The polypeptide is NAD(P)H-quinone oxidoreductase subunit L (Synechococcus sp. (strain JA-2-3B'a(2-13)) (Cyanobacteria bacterium Yellowstone B-Prime)).